The sequence spans 30 residues: U10-ctenitoxin-Co1b (30 aa).

Cystine bridges form between C2/C17 and C9/C22.

As to expression, expressed by the venom gland.

Its subcellular location is the secreted. Functionally, antagonist of L-type calcium channels (Cav1/CACNA1). The chain is U10-ctenitoxin-Co1b from Ctenus ornatus (Brazilian spider).